A 274-amino-acid polypeptide reads, in one-letter code: Acetyl-coenzyme A carboxylase carboxyl transferase subunit alpha (274 aa).

The CoA carboxyltransferase C-terminal domain occupies 2 to 250 (NKEFIKSIVV…KKELMNAMNE (249 aa)).

Belongs to the AccA family. Acetyl-CoA carboxylase is a heterohexamer composed of biotin carboxyl carrier protein (AccB), biotin carboxylase (AccC) and two subunits each of ACCase subunit alpha (AccA) and ACCase subunit beta (AccD).

It is found in the cytoplasm. It catalyses the reaction N(6)-carboxybiotinyl-L-lysyl-[protein] + acetyl-CoA = N(6)-biotinyl-L-lysyl-[protein] + malonyl-CoA. It participates in lipid metabolism; malonyl-CoA biosynthesis; malonyl-CoA from acetyl-CoA: step 1/1. Component of the acetyl coenzyme A carboxylase (ACC) complex. First, biotin carboxylase catalyzes the carboxylation of biotin on its carrier protein (BCCP) and then the CO(2) group is transferred by the carboxyltransferase to acetyl-CoA to form malonyl-CoA. This is Acetyl-coenzyme A carboxylase carboxyl transferase subunit alpha from Clostridium botulinum (strain Eklund 17B / Type B).